The sequence spans 331 residues: Ketol-acid reductoisomerase (NADP(+)) (331 aa).

One can recognise a KARI N-terminal Rossmann domain in the interval 2 to 182; sequence AKMYYDQDAD…GGTKAGAIET (181 aa). NADP(+) contacts are provided by residues 25–28, Ser-51, Ser-53, and 83–86; these read FGSQ and DEKQ. The active site involves His-108. Gly-134 provides a ligand contact to NADP(+). The KARI C-terminal knotted domain maps to 183-328; sequence TFKEETETDL…KSLREMMPWL (146 aa). Mg(2+) is bound by residues Asp-191, Glu-195, Glu-227, and Glu-231. Ser-252 lines the substrate pocket.

This sequence belongs to the ketol-acid reductoisomerase family. Mg(2+) is required as a cofactor.

It carries out the reaction (2R)-2,3-dihydroxy-3-methylbutanoate + NADP(+) = (2S)-2-acetolactate + NADPH + H(+). The enzyme catalyses (2R,3R)-2,3-dihydroxy-3-methylpentanoate + NADP(+) = (S)-2-ethyl-2-hydroxy-3-oxobutanoate + NADPH + H(+). It participates in amino-acid biosynthesis; L-isoleucine biosynthesis; L-isoleucine from 2-oxobutanoate: step 2/4. Its pathway is amino-acid biosynthesis; L-valine biosynthesis; L-valine from pyruvate: step 2/4. In terms of biological role, involved in the biosynthesis of branched-chain amino acids (BCAA). Catalyzes an alkyl-migration followed by a ketol-acid reduction of (S)-2-acetolactate (S2AL) to yield (R)-2,3-dihydroxy-isovalerate. In the isomerase reaction, S2AL is rearranged via a Mg-dependent methyl migration to produce 3-hydroxy-3-methyl-2-ketobutyrate (HMKB). In the reductase reaction, this 2-ketoacid undergoes a metal-dependent reduction by NADPH to yield (R)-2,3-dihydroxy-isovalerate. The polypeptide is Ketol-acid reductoisomerase (NADP(+)) (Caldanaerobacter subterraneus subsp. tengcongensis (strain DSM 15242 / JCM 11007 / NBRC 100824 / MB4) (Thermoanaerobacter tengcongensis)).